Consider the following 193-residue polypeptide: Interleukin-23 subunit alpha (193 aa).

Positions 1-22 (MLGSRAVMLMLLLLLLPWTSQG) are cleaved as a signal peptide.

It belongs to the IL-6 superfamily. In terms of assembly, heterodimer with IL12B; disulfide-linked. The heterodimer is known as interleukin IL-23. Interacts with IL23R; this interaction enables recruitment of IL12RB1.

The protein resides in the secreted. In terms of biological role, associates with IL12B to form the pro-inflammatory cytokine IL-23 that plays different roles in innate and adaptive immunity. Released by antigen-presenting cells such as dendritic cells or macrophages, binds to a heterodimeric receptor complex composed of IL12RB1 and IL23R to activate JAK2 and TYK2 which then phosphorylate the receptor to form a docking site leading to the phosphorylation of STAT3 and STAT4. This process leads to activation of several pathways including p38 MAPK or NF-kappa-B and promotes the production of pro-inflammatory cytokines such as interleukin-17A/IL17A. In turn, participates in the early and effective intracellular bacterial clearance. Promotes the expansion and survival of T-helper 17 cells, a CD4-positive helper T-cell subset that produces IL-17, as well as other IL-17-producing cells. The polypeptide is Interleukin-23 subunit alpha (IL23A) (Sus scrofa (Pig)).